The primary structure comprises 216 residues: MOB kinase activator 1A (216 aa).

Residue serine 2 is modified to N-acetylserine. Phosphothreonine is present on residues threonine 12 and threonine 35. Threonine 74 is subject to Phosphothreonine; by STK3/MST2. Zn(2+)-binding residues include cysteine 79, cysteine 84, histidine 161, and histidine 166. A Phosphothreonine modification is found at threonine 181.

The protein belongs to the MOB1/phocein family. As to quaternary structure, binds STK38 and STK38L. Interacts with LATS1 and LATS2. Forms a tripartite complex with STK38 and STK3/MST2. Phosphorylated by STK3/MST2 and STK4/MST1 and this phosphorylation enhances its binding to LATS1. As to expression, adrenal gland, bone marrow, brain, placenta, prostate, salivary gland, skeletal muscle, testis, thymus, thyroid gland, heart, spinal cord, fetal brain and fetal liver.

Its function is as follows. Activator of LATS1/2 in the Hippo signaling pathway which plays a pivotal role in organ size control and tumor suppression by restricting proliferation and promoting apoptosis. The core of this pathway is composed of a kinase cascade wherein STK3/MST2 and STK4/MST1, in complex with its regulatory protein SAV1, phosphorylates and activates LATS1/2 in complex with its regulatory protein MOB1, which in turn phosphorylates and inactivates YAP1 oncoprotein and WWTR1/TAZ. Phosphorylation of YAP1 by LATS1/2 inhibits its translocation into the nucleus to regulate cellular genes important for cell proliferation, cell death, and cell migration. Stimulates the kinase activity of STK38 and STK38L. Acts cooperatively with STK3/MST2 to activate STK38. The polypeptide is MOB kinase activator 1A (Homo sapiens (Human)).